We begin with the raw amino-acid sequence, 245 residues long: Bis(5'-nucleosyl)-tetraphosphatase PrpE [asymmetrical] (245 aa).

The protein belongs to the PrpE family. Ni(2+) serves as cofactor.

The catalysed reaction is P(1),P(4)-bis(5'-guanosyl) tetraphosphate + H2O = GMP + GTP + 2 H(+). In terms of biological role, asymmetrically hydrolyzes Ap4p to yield AMP and ATP. The sequence is that of Bis(5'-nucleosyl)-tetraphosphatase PrpE [asymmetrical] from Geobacillus sp. (strain WCH70).